A 276-amino-acid chain; its full sequence is Ribosomal RNA small subunit methyltransferase A (276 aa).

Residues N24, L26, G51, E72, D97, and N118 each coordinate S-adenosyl-L-methionine.

This sequence belongs to the class I-like SAM-binding methyltransferase superfamily. rRNA adenine N(6)-methyltransferase family. RsmA subfamily.

The protein resides in the cytoplasm. The enzyme catalyses adenosine(1518)/adenosine(1519) in 16S rRNA + 4 S-adenosyl-L-methionine = N(6)-dimethyladenosine(1518)/N(6)-dimethyladenosine(1519) in 16S rRNA + 4 S-adenosyl-L-homocysteine + 4 H(+). Specifically dimethylates two adjacent adenosines (A1518 and A1519) in the loop of a conserved hairpin near the 3'-end of 16S rRNA in the 30S particle. May play a critical role in biogenesis of 30S subunits. The protein is Ribosomal RNA small subunit methyltransferase A of Clostridium acetobutylicum (strain ATCC 824 / DSM 792 / JCM 1419 / IAM 19013 / LMG 5710 / NBRC 13948 / NRRL B-527 / VKM B-1787 / 2291 / W).